The chain runs to 847 residues: DNA ligase (847 aa).

Residues 1–22 (MSDTTTGSDAADAAVPATTPAD) are compositionally biased toward low complexity. Residues 1-23 (MSDTTTGSDAADAAVPATTPADL) form a disordered region. NAD(+) is bound by residues 54–58 (DAEYD), 104–105 (SL), and glutamate 135. Residue lysine 137 is the N6-AMP-lysine intermediate of the active site. NAD(+) contacts are provided by arginine 158, glutamate 195, lysine 326, and lysine 350. Zn(2+) is bound by residues cysteine 444, cysteine 447, cysteine 463, and cysteine 469. A BRCT domain is found at 686–775 (AAGGVLAGLA…PDAIALPEAD (90 aa)). The segment at 770 to 847 (ALPEADPVPD…AEPDGPAETP (78 aa)) is disordered. Low complexity-rich tracts occupy residues 786-807 (DGGS…ATAE) and 819-833 (PAAA…VEAG).

Belongs to the NAD-dependent DNA ligase family. LigA subfamily. Mg(2+) is required as a cofactor. The cofactor is Mn(2+).

It carries out the reaction NAD(+) + (deoxyribonucleotide)n-3'-hydroxyl + 5'-phospho-(deoxyribonucleotide)m = (deoxyribonucleotide)n+m + AMP + beta-nicotinamide D-nucleotide.. Its function is as follows. DNA ligase that catalyzes the formation of phosphodiester linkages between 5'-phosphoryl and 3'-hydroxyl groups in double-stranded DNA using NAD as a coenzyme and as the energy source for the reaction. It is essential for DNA replication and repair of damaged DNA. The polypeptide is DNA ligase (Clavibacter sepedonicus (Clavibacter michiganensis subsp. sepedonicus)).